A 438-amino-acid chain; its full sequence is Adenylosuccinate synthetase (438 aa).

Residues 13–19 (GDEGKGK) and 41–43 (GHT) contribute to the GTP site. D14 functions as the Proton acceptor in the catalytic mechanism. 2 residues coordinate Mg(2+): D14 and G41. IMP is bound by residues 14-17 (DEGK), 39-42 (NAGH), T136, R150, Q231, T246, and R310. The Proton donor role is filled by H42. 306–312 (STTGRRR) contacts substrate. GTP-binding positions include R312, 338–340 (KID), and 421–423 (STG).

It belongs to the adenylosuccinate synthetase family. Homodimer. It depends on Mg(2+) as a cofactor.

The protein resides in the cytoplasm. It catalyses the reaction IMP + L-aspartate + GTP = N(6)-(1,2-dicarboxyethyl)-AMP + GDP + phosphate + 2 H(+). It functions in the pathway purine metabolism; AMP biosynthesis via de novo pathway; AMP from IMP: step 1/2. In terms of biological role, plays an important role in the de novo pathway of purine nucleotide biosynthesis. Catalyzes the first committed step in the biosynthesis of AMP from IMP. The polypeptide is Adenylosuccinate synthetase (Blochmanniella floridana).